We begin with the raw amino-acid sequence, 82 residues long: Small ribosomal subunit protein uS17 (82 aa).

The protein belongs to the universal ribosomal protein uS17 family. Part of the 30S ribosomal subunit.

One of the primary rRNA binding proteins, it binds specifically to the 5'-end of 16S ribosomal RNA. This chain is Small ribosomal subunit protein uS17, found in Paracoccus denitrificans (strain Pd 1222).